The primary structure comprises 272 residues: Acetylglutamate kinase (272 aa).

Substrate is bound by residues 41 to 42, arginine 63, and asparagine 166; that span reads GG.

The protein belongs to the acetylglutamate kinase family. ArgB subfamily.

Its subcellular location is the cytoplasm. It catalyses the reaction N-acetyl-L-glutamate + ATP = N-acetyl-L-glutamyl 5-phosphate + ADP. It functions in the pathway amino-acid biosynthesis; L-arginine biosynthesis; N(2)-acetyl-L-ornithine from L-glutamate: step 2/4. Catalyzes the ATP-dependent phosphorylation of N-acetyl-L-glutamate. The chain is Acetylglutamate kinase from Anaeromyxobacter dehalogenans (strain 2CP-1 / ATCC BAA-258).